Here is a 113-residue protein sequence, read N- to C-terminus: U11-theraphotoxin-Hhn1a (113 aa).

A signal peptide spans 1-21; sequence MNTVRVTFLLVFVLAVSLGQA. The propeptide occupies 22–74; it reads DKDENRMEMQEKAEQGKSYLDFAENLLLQKLEELEAKLLEEDSEESRNSRQKR. 3 cysteine pairs are disulfide-bonded: C75–C90, C82–C95, and C89–C110.

This sequence belongs to the neurotoxin 14 (magi-1) family. 01 (HNTX-16) subfamily. As to expression, expressed by the venom gland.

The protein resides in the secreted. In terms of biological role, probable ion channel inhibitor. The protein is U11-theraphotoxin-Hhn1a of Cyriopagopus hainanus (Chinese bird spider).